The sequence spans 388 residues: ATP phosphoribosyltransferase regulatory subunit (388 aa).

This sequence belongs to the class-II aminoacyl-tRNA synthetase family. HisZ subfamily. Heteromultimer composed of HisG and HisZ subunits.

The protein localises to the cytoplasm. It participates in amino-acid biosynthesis; L-histidine biosynthesis; L-histidine from 5-phospho-alpha-D-ribose 1-diphosphate: step 1/9. Its function is as follows. Required for the first step of histidine biosynthesis. May allow the feedback regulation of ATP phosphoribosyltransferase activity by histidine. This chain is ATP phosphoribosyltransferase regulatory subunit, found in Acinetobacter baumannii (strain AB307-0294).